A 158-amino-acid polypeptide reads, in one-letter code: 2-C-methyl-D-erythritol 2,4-cyclodiphosphate synthase (158 aa).

2 residues coordinate a divalent metal cation: aspartate 9 and histidine 11. Residues 9–11 (DVH) and 35–36 (HS) each bind 4-CDP-2-C-methyl-D-erythritol 2-phosphate. Residue histidine 43 participates in a divalent metal cation binding. Residues 57 to 59 (DIG), 62 to 66 (FPDTD), 101 to 107 (AQAPKMA), 133 to 136 (TTTE), phenylalanine 140, and arginine 143 contribute to the 4-CDP-2-C-methyl-D-erythritol 2-phosphate site.

Belongs to the IspF family. In terms of assembly, homotrimer. It depends on a divalent metal cation as a cofactor.

It carries out the reaction 4-CDP-2-C-methyl-D-erythritol 2-phosphate = 2-C-methyl-D-erythritol 2,4-cyclic diphosphate + CMP. The protein operates within isoprenoid biosynthesis; isopentenyl diphosphate biosynthesis via DXP pathway; isopentenyl diphosphate from 1-deoxy-D-xylulose 5-phosphate: step 4/6. Functionally, involved in the biosynthesis of isopentenyl diphosphate (IPP) and dimethylallyl diphosphate (DMAPP), two major building blocks of isoprenoid compounds. Catalyzes the conversion of 4-diphosphocytidyl-2-C-methyl-D-erythritol 2-phosphate (CDP-ME2P) to 2-C-methyl-D-erythritol 2,4-cyclodiphosphate (ME-CPP) with a corresponding release of cytidine 5-monophosphate (CMP). The chain is 2-C-methyl-D-erythritol 2,4-cyclodiphosphate synthase from Vibrio campbellii (strain ATCC BAA-1116).